Consider the following 314-residue polypeptide: MQIKLANPRGFCAGVDRAIEIVNRALDVFGPPIYVRHEVVHNKFVVDNLRQRGAIFVEELDQVPDNVIVIFSAHGVSQAVRKEAEGRGLKVFDATCPLVTKVHMEVVRYSRDGHECVLIGHEGHPEVEGTMGQYDASNGGAIYLVEDEADVAALEVRKPEALHYVTQTTLSMDDTSKVIDALRAKFPQIQGPRKNDICYATQNRQDAVKELADQCDMVLVVGSPNSSNSNRLRELAERMGTPAYLIDGAEDMQRGWFDGVRRIGITAGASAPEVLVRGVIAQLREWGASEEQELEGREENITFSMPKELRVKAL.

Residue Cys-12 coordinates [4Fe-4S] cluster. 2 residues coordinate (2E)-4-hydroxy-3-methylbut-2-enyl diphosphate: His-41 and His-74. Dimethylallyl diphosphate is bound by residues His-41 and His-74. Isopentenyl diphosphate contacts are provided by His-41 and His-74. Cys-96 lines the [4Fe-4S] cluster pocket. His-124 serves as a coordination point for (2E)-4-hydroxy-3-methylbut-2-enyl diphosphate. His-124 lines the dimethylallyl diphosphate pocket. His-124 is a binding site for isopentenyl diphosphate. Residue Glu-126 is the Proton donor of the active site. Residue Thr-168 coordinates (2E)-4-hydroxy-3-methylbut-2-enyl diphosphate. Cys-198 serves as a coordination point for [4Fe-4S] cluster. Residues Ser-226, Ser-227, Asn-228, and Ser-270 each contribute to the (2E)-4-hydroxy-3-methylbut-2-enyl diphosphate site. Dimethylallyl diphosphate contacts are provided by Ser-226, Ser-227, Asn-228, and Ser-270. Ser-226, Ser-227, Asn-228, and Ser-270 together coordinate isopentenyl diphosphate.

The protein belongs to the IspH family. Requires [4Fe-4S] cluster as cofactor.

The enzyme catalyses isopentenyl diphosphate + 2 oxidized [2Fe-2S]-[ferredoxin] + H2O = (2E)-4-hydroxy-3-methylbut-2-enyl diphosphate + 2 reduced [2Fe-2S]-[ferredoxin] + 2 H(+). The catalysed reaction is dimethylallyl diphosphate + 2 oxidized [2Fe-2S]-[ferredoxin] + H2O = (2E)-4-hydroxy-3-methylbut-2-enyl diphosphate + 2 reduced [2Fe-2S]-[ferredoxin] + 2 H(+). The protein operates within isoprenoid biosynthesis; dimethylallyl diphosphate biosynthesis; dimethylallyl diphosphate from (2E)-4-hydroxy-3-methylbutenyl diphosphate: step 1/1. It functions in the pathway isoprenoid biosynthesis; isopentenyl diphosphate biosynthesis via DXP pathway; isopentenyl diphosphate from 1-deoxy-D-xylulose 5-phosphate: step 6/6. Catalyzes the conversion of 1-hydroxy-2-methyl-2-(E)-butenyl 4-diphosphate (HMBPP) into a mixture of isopentenyl diphosphate (IPP) and dimethylallyl diphosphate (DMAPP). Acts in the terminal step of the DOXP/MEP pathway for isoprenoid precursor biosynthesis. This Pseudomonas aeruginosa (strain LESB58) protein is 4-hydroxy-3-methylbut-2-enyl diphosphate reductase.